Reading from the N-terminus, the 102-residue chain is Monothiol glutaredoxin-S7 (102 aa).

A Glutaredoxin domain is found at 1–101 (MEKLQKMTSE…PMLKRVGALW (101 aa)). Residue Cys21 participates in [2Fe-2S] cluster binding. Positions 99–102 (ALWL) match the Responsive for interaction with TGA factors motif.

This sequence belongs to the glutaredoxin family. CC-type subfamily.

It is found in the cytoplasm. The protein localises to the nucleus. Its function is as follows. May only reduce GSH-thiol disulfides, but not protein disulfides. In Arabidopsis thaliana (Mouse-ear cress), this protein is Monothiol glutaredoxin-S7 (GRXS7).